A 741-amino-acid polypeptide reads, in one-letter code: MKKPFTGLLMKRGTLSSFRNFIQLFSLQSRGLSFSTLTDTRPFPDYSPKKASVRDTEFVHQITNVIKLRRAEPLRRSLKPYECKFKTDHLIWVLMKIKCDYRLVLDFFDWARSRRDSNLESLCIVIHLAVASKDLKVAQSLISSFWERPKLNVTDSFVQFFDLLVYTYKDWGSDPRVFDVFFQVLVDFGLLREARRVFEKMLNYGLVLSVDSCNVYLTRLSKDCYKTATAIIVFREFPEVGVCWNVASYNIVIHFVCQLGRIKEAHHLLLLMELKGYTPDVISYSTVVNGYCRFGELDKVWKLIEVMKRKGLKPNSYIYGSIIGLLCRICKLAEAEEAFSEMIRQGILPDTVVYTTLIDGFCKRGDIRAASKFFYEMHSRDITPDVLTYTAIISGFCQIGDMVEAGKLFHEMFCKGLEPDSVTFTELINGYCKAGHMKDAFRVHNHMIQAGCSPNVVTYTTLIDGLCKEGDLDSANELLHEMWKIGLQPNIFTYNSIVNGLCKSGNIEEAVKLVGEFEAAGLNADTVTYTTLMDAYCKSGEMDKAQEILKEMLGKGLQPTIVTFNVLMNGFCLHGMLEDGEKLLNWMLAKGIAPNATTFNSLVKQYCIRNNLKAATAIYKDMCSRGVGPDGKTYENLVKGHCKARNMKEAWFLFQEMKGKGFSVSVSTYSVLIKGFLKRKKFLEAREVFDQMRREGLAADKEIFDFFSDTKYKGKRPDTIVDPIDEIIENYLVDEQLRGAN.

The N-terminal 21 residues, 1–21 (MKKPFTGLLMKRGTLSSFRNF), are a transit peptide targeting the mitochondrion. PPR repeat units follow at residues 174–208 (DPRVFDVFFQVLVDFGLLREARRVFEKMLNYGLVL), 209–244 (SVDSCNVYLTRLSKDCYKTATAIIVFREFPEVGVCW), 245–279 (NVASYNIVIHFVCQLGRIKEAHHLLLLMELKGYTP), 280–314 (DVISYSTVVNGYCRFGELDKVWKLIEVMKRKGLKP), 315–349 (NSYIYGSIIGLLCRICKLAEAEEAFSEMIRQGILP), 350–384 (DTVVYTTLIDGFCKRGDIRAASKFFYEMHSRDITP), 385–419 (DVLTYTAIISGFCQIGDMVEAGKLFHEMFCKGLEP), 420–454 (DSVTFTELINGYCKAGHMKDAFRVHNHMIQAGCSP), 455–489 (NVVTYTTLIDGLCKEGDLDSANELLHEMWKIGLQP), 490–524 (NIFTYNSIVNGLCKSGNIEEAVKLVGEFEAAGLNA), 525–559 (DTVTYTTLMDAYCKSGEMDKAQEILKEMLGKGLQP), 560–594 (TIVTFNVLMNGFCLHGMLEDGEKLLNWMLAKGIAP), 595–629 (NATTFNSLVKQYCIRNNLKAATAIYKDMCSRGVGP), 630–664 (DGKTYENLVKGHCKARNMKEAWFLFQEMKGKGFSV), and 665–699 (SVSTYSVLIKGFLKRKKFLEAREVFDQMRREGLAA).

Belongs to the PPR family. P subfamily.

Its subcellular location is the mitochondrion. This is Pentatricopeptide repeat-containing protein At1g05670, mitochondrial from Arabidopsis thaliana (Mouse-ear cress).